The chain runs to 152 residues: Deoxyuridine 5'-triphosphate nucleotidohydrolase (152 aa).

Residues 72-74, Asn-85, and 89-91 each bind substrate; these read RSG and TID.

It belongs to the dUTPase family. It depends on Mg(2+) as a cofactor.

It catalyses the reaction dUTP + H2O = dUMP + diphosphate + H(+). It participates in pyrimidine metabolism; dUMP biosynthesis; dUMP from dCTP (dUTP route): step 2/2. In terms of biological role, this enzyme is involved in nucleotide metabolism: it produces dUMP, the immediate precursor of thymidine nucleotides and it decreases the intracellular concentration of dUTP so that uracil cannot be incorporated into DNA. The sequence is that of Deoxyuridine 5'-triphosphate nucleotidohydrolase from Rhodopseudomonas palustris (strain ATCC BAA-98 / CGA009).